We begin with the raw amino-acid sequence, 193 residues long: Ion-translocating oxidoreductase complex subunit A (193 aa).

6 helical membrane-spanning segments follow: residues 5-25, 39-59, 63-83, 102-122, 134-154, and 171-191; these read LLLF…FLGL, MGMG…AWLI, ILIP…VIAV, LLGI…VALL, ALYG…FTAI, and AIAL…SGLV.

Belongs to the NqrDE/RnfAE family. The complex is composed of six subunits: RsxA, RsxB, RsxC, RsxD, RsxE and RsxG.

The protein localises to the cell inner membrane. Functionally, part of a membrane-bound complex that couples electron transfer with translocation of ions across the membrane. Required to maintain the reduced state of SoxR. The polypeptide is Ion-translocating oxidoreductase complex subunit A (Shigella boydii serotype 4 (strain Sb227)).